Here is a 72-residue protein sequence, read N- to C-terminus: UPF0270 protein YheU (72 aa).

It belongs to the UPF0270 family.

The polypeptide is UPF0270 protein YheU (Salmonella choleraesuis (strain SC-B67)).